The sequence spans 103 residues: Flagellar hook-basal body complex protein FliE (103 aa).

Belongs to the FliE family.

It is found in the bacterial flagellum basal body. This Helicobacter hepaticus (strain ATCC 51449 / 3B1) protein is Flagellar hook-basal body complex protein FliE.